A 143-amino-acid chain; its full sequence is Transcriptional regulator MraZ (143 aa).

SpoVT-AbrB domains are found at residues 5 to 47 (TYTP…PRAE) and 76 to 119 (TDEQ…DAQA).

This sequence belongs to the MraZ family. Forms oligomers.

The protein resides in the cytoplasm. It localises to the nucleoid. The protein is Transcriptional regulator MraZ of Mycobacterium avium (strain 104).